We begin with the raw amino-acid sequence, 325 residues long: Forkhead box protein B1 (325 aa).

The segment at residues 12–103 (QKPPYSYISL…GDMFENGSFL (92 aa)) is a DNA-binding region (fork-head). The segment covering 284 to 309 (LSNSPPSLSPTSSQTATSQSSPATPS) has biased composition (low complexity). The disordered stretch occupies residues 284–325 (LSNSPPSLSPTSSQTATSQSSPATPSETLTSPASALHSVAVH).

In terms of tissue distribution, expressed widespread in the early developing ventricular zone of the neural tube and later restricted to areas of the spinal cord, hindbrain, thalamus and hypothalamus. Expressed in epithelial cells of developing and adult mammary glands.

The protein localises to the nucleus. Its function is as follows. Transcription factor expressed by neural progenitor cells in specific regions of the embryonic neuroepithelium. Essential for the mammillary nuclei maintenance. Negatively regulates the proliferation of oligodendrocyte progenitors and promotes oligodendrocyte maturation. Also expressed in mammary glands, plays a role in lactation, controls development of mammary glands and the inferior colliculi of the midbrain in the central nervous system that regulates the milk-ejection reflex. The sequence is that of Forkhead box protein B1 (Foxb1) from Mus musculus (Mouse).